Reading from the N-terminus, the 457-residue chain is tRNA modification GTPase MnmE (457 aa).

(6S)-5-formyl-5,6,7,8-tetrahydrofolate is bound by residues Arg25, Glu87, and Arg126. The region spanning Gly223–Phe377 is the TrmE-type G domain. Asn233 is a binding site for K(+). GTP is bound by residues Asn233–Ser238, Thr252–Thr258, and Asp277–Gly280. A Mg(2+)-binding site is contributed by Ser237. 3 residues coordinate K(+): Thr252, Ile254, and Thr257. Thr258 contributes to the Mg(2+) binding site. Lys457 contacts (6S)-5-formyl-5,6,7,8-tetrahydrofolate.

Belongs to the TRAFAC class TrmE-Era-EngA-EngB-Septin-like GTPase superfamily. TrmE GTPase family. As to quaternary structure, homodimer. Heterotetramer of two MnmE and two MnmG subunits. K(+) serves as cofactor.

It is found in the cytoplasm. In terms of biological role, exhibits a very high intrinsic GTPase hydrolysis rate. Involved in the addition of a carboxymethylaminomethyl (cmnm) group at the wobble position (U34) of certain tRNAs, forming tRNA-cmnm(5)s(2)U34. The chain is tRNA modification GTPase MnmE from Streptococcus pneumoniae (strain Hungary19A-6).